The chain runs to 335 residues: Ferrochelatase (335 aa).

2 residues coordinate Fe cation: His194 and Glu275.

Belongs to the ferrochelatase family.

The protein localises to the cytoplasm. It carries out the reaction heme b + 2 H(+) = protoporphyrin IX + Fe(2+). It participates in porphyrin-containing compound metabolism; protoheme biosynthesis; protoheme from protoporphyrin-IX: step 1/1. Functionally, catalyzes the ferrous insertion into protoporphyrin IX. This chain is Ferrochelatase, found in Sodalis glossinidius (strain morsitans).